A 220-amino-acid chain; its full sequence is Octanoyltransferase (220 aa).

The region spanning 36–212 (ADSPDQFWLV…CLARQLGRRL (177 aa)) is the BPL/LPL catalytic domain. Substrate is bound by residues 75–82 (RGGQVTYH), 142–144 (SLG), and 155–157 (GVA). The Acyl-thioester intermediate role is filled by cysteine 173.

Belongs to the LipB family.

It is found in the cytoplasm. The enzyme catalyses octanoyl-[ACP] + L-lysyl-[protein] = N(6)-octanoyl-L-lysyl-[protein] + holo-[ACP] + H(+). The protein operates within protein modification; protein lipoylation via endogenous pathway; protein N(6)-(lipoyl)lysine from octanoyl-[acyl-carrier-protein]: step 1/2. Functionally, catalyzes the transfer of endogenously produced octanoic acid from octanoyl-acyl-carrier-protein onto the lipoyl domains of lipoate-dependent enzymes. Lipoyl-ACP can also act as a substrate although octanoyl-ACP is likely to be the physiological substrate. In Chromohalobacter salexigens (strain ATCC BAA-138 / DSM 3043 / CIP 106854 / NCIMB 13768 / 1H11), this protein is Octanoyltransferase.